We begin with the raw amino-acid sequence, 221 residues long: Small ribosomal subunit protein uS3 (221 aa).

One can recognise a KH type-2 domain in the interval Ile-39–Lys-108.

Belongs to the universal ribosomal protein uS3 family. In terms of assembly, part of the 30S ribosomal subunit. Forms a tight complex with proteins S10 and S14.

Functionally, binds the lower part of the 30S subunit head. Binds mRNA in the 70S ribosome, positioning it for translation. In Clostridium novyi (strain NT), this protein is Small ribosomal subunit protein uS3.